The chain runs to 249 residues: Putative TrmH family tRNA/rRNA methyltransferase YacO (249 aa).

S-adenosyl-L-methionine is bound by residues Gly198, Leu218, and Leu227.

This sequence belongs to the class IV-like SAM-binding methyltransferase superfamily. RNA methyltransferase TrmH family.

The polypeptide is Putative TrmH family tRNA/rRNA methyltransferase YacO (yacO) (Bacillus subtilis (strain 168)).